We begin with the raw amino-acid sequence, 299 residues long: 6-phosphogluconate dehydrogenase, NAD(+)-dependent, decarboxylating (299 aa).

NAD(+) is bound by residues 7–12 (GLGRMG), 67–69 (VPA), and N95. Substrate is bound by residues N95, S118, and G120. The Proton acceptor role is filled by K169. Residue 172–173 (HN) participates in substrate binding. E176 (proton donor) is an active-site residue. Substrate is bound by residues Y177 and R268.

It belongs to the 6-phosphogluconate dehydrogenase family. Homotetramer.

It carries out the reaction 6-phospho-D-gluconate + NAD(+) = D-ribulose 5-phosphate + CO2 + NADH. Its pathway is carbohydrate degradation; pentose phosphate pathway. Its function is as follows. Catalyzes the oxidative decarboxylation of 6-phosphogluconate to ribulose 5-phosphate and CO(2), with concomitant reduction of NAD to NADH. The polypeptide is 6-phosphogluconate dehydrogenase, NAD(+)-dependent, decarboxylating (Haloferax volcanii (strain ATCC 29605 / DSM 3757 / JCM 8879 / NBRC 14742 / NCIMB 2012 / VKM B-1768 / DS2) (Halobacterium volcanii)).